The primary structure comprises 475 residues: Argininosuccinate lyase 1 (475 aa).

The protein belongs to the lyase 1 family. Argininosuccinate lyase subfamily.

It localises to the cytoplasm. It carries out the reaction 2-(N(omega)-L-arginino)succinate = fumarate + L-arginine. It participates in amino-acid biosynthesis; L-arginine biosynthesis; L-arginine from L-ornithine and carbamoyl phosphate: step 3/3. In Pseudomonas fluorescens (strain Pf0-1), this protein is Argininosuccinate lyase 1.